The following is a 334-amino-acid chain: MALRWGICSAGKISHDFTVALRTLPAEQHQVVAVAARELAHAQEFAQKHSIPRAYGSYEELAEDPEIDVVYVGTIHPHHLRVGLLFMNAKKNVLCEKPLAMNLKEVQQMISAARRSDVFLMEAVWTRFFPASLEISRLLSQNAVGQVKLVRADFGAALLGVPRAVQKHLGGGALLDIGIYCIQFVLMVFNGEKPEQIQASGVCLDTGVDEAMVVTLKFSGHRLAVCTCTVAAELPNEALIVGTEGTIKVPAHMWCPTSLLVNGVETQFPVPDPHLPLNFINSTGMRYEAEEVRRCVLAGLKESSRMSHADSALLADIMDEARRQVGVVYSQDSQ.

This sequence belongs to the Gfo/Idh/MocA family. Homodimer.

It carries out the reaction (1R,2R)-1,2-dihydrobenzene-1,2-diol + NADP(+) = catechol + NADPH + H(+). It catalyses the reaction D-xylose + NADP(+) = D-xylono-1,5-lactone + NADPH + H(+). This is Trans-1,2-dihydrobenzene-1,2-diol dehydrogenase (dhdh) from Danio rerio (Zebrafish).